The chain runs to 355 residues: N5-carboxyaminoimidazole ribonucleotide synthase (355 aa).

ATP-binding positions include R80, K120, G125–Q131, E153–I156, E161, H184, and N237–E238. The 184-residue stretch at K84–T267 folds into the ATP-grasp domain.

It belongs to the PurK/PurT family. Homodimer.

The catalysed reaction is 5-amino-1-(5-phospho-beta-D-ribosyl)imidazole + hydrogencarbonate + ATP = 5-carboxyamino-1-(5-phospho-D-ribosyl)imidazole + ADP + phosphate + 2 H(+). Its pathway is purine metabolism; IMP biosynthesis via de novo pathway; 5-amino-1-(5-phospho-D-ribosyl)imidazole-4-carboxylate from 5-amino-1-(5-phospho-D-ribosyl)imidazole (N5-CAIR route): step 1/2. Catalyzes the ATP-dependent conversion of 5-aminoimidazole ribonucleotide (AIR) and HCO(3)(-) to N5-carboxyaminoimidazole ribonucleotide (N5-CAIR). The chain is N5-carboxyaminoimidazole ribonucleotide synthase from Escherichia coli (strain K12).